The sequence spans 270 residues: Cytosolic Fe-S cluster assembly factor NUBP2 homolog (270 aa).

Residue 21–28 (GKGGVGKS) coordinates ATP. [4Fe-4S] cluster is bound by residues Cys195 and Cys198.

Belongs to the Mrp/NBP35 ATP-binding proteins family. NUBP2/CFD1 subfamily. In terms of assembly, heterotetramer of 2 NUBP1 and 2 NUBP2 chains. [4Fe-4S] cluster serves as cofactor.

The protein resides in the cytoplasm. Component of the cytosolic iron-sulfur (Fe/S) protein assembly (CIA) machinery. Required for maturation of extramitochondrial Fe-S proteins. The NUBP1-NUBP2 heterotetramer forms a Fe-S scaffold complex, mediating the de novo assembly of an Fe-S cluster and its transfer to target apoproteins. This is Cytosolic Fe-S cluster assembly factor NUBP2 homolog from Nematostella vectensis (Starlet sea anemone).